Consider the following 341-residue polypeptide: UDP-N-acetylglucosamine--N-acetylmuramyl-(pentapeptide) pyrophosphoryl-undecaprenol N-acetylglucosamine transferase (341 aa).

Residues 10–12, Asn124, Ser177, and Gln275 contribute to the UDP-N-acetyl-alpha-D-glucosamine site; that span reads TGG.

The protein belongs to the glycosyltransferase 28 family. MurG subfamily.

Its subcellular location is the cell inner membrane. The enzyme catalyses di-trans,octa-cis-undecaprenyl diphospho-N-acetyl-alpha-D-muramoyl-L-alanyl-D-glutamyl-meso-2,6-diaminopimeloyl-D-alanyl-D-alanine + UDP-N-acetyl-alpha-D-glucosamine = di-trans,octa-cis-undecaprenyl diphospho-[N-acetyl-alpha-D-glucosaminyl-(1-&gt;4)]-N-acetyl-alpha-D-muramoyl-L-alanyl-D-glutamyl-meso-2,6-diaminopimeloyl-D-alanyl-D-alanine + UDP + H(+). It functions in the pathway cell wall biogenesis; peptidoglycan biosynthesis. Functionally, cell wall formation. Catalyzes the transfer of a GlcNAc subunit on undecaprenyl-pyrophosphoryl-MurNAc-pentapeptide (lipid intermediate I) to form undecaprenyl-pyrophosphoryl-MurNAc-(pentapeptide)GlcNAc (lipid intermediate II). The protein is UDP-N-acetylglucosamine--N-acetylmuramyl-(pentapeptide) pyrophosphoryl-undecaprenol N-acetylglucosamine transferase of Campylobacter hominis (strain ATCC BAA-381 / DSM 21671 / CCUG 45161 / LMG 19568 / NCTC 13146 / CH001A).